Consider the following 326-residue polypeptide: tRNA-dihydrouridine(20a/20b) synthase [NAD(P)+] (326 aa).

Residues 26–28 (PMV) and glutamine 79 contribute to the FMN site. The active-site Proton donor is cysteine 108. FMN-binding positions include lysine 149, histidine 177, 208–210 (NGD), and 232–233 (AR).

The protein belongs to the Dus family. Dus4 subfamily. FMN serves as cofactor.

The protein localises to the mitochondrion. It carries out the reaction 5,6-dihydrouridine(20a) in tRNA + NADP(+) = uridine(20a) in tRNA + NADPH + H(+). The catalysed reaction is 5,6-dihydrouridine(20a) in tRNA + NAD(+) = uridine(20a) in tRNA + NADH + H(+). It catalyses the reaction 5,6-dihydrouridine(20b) in tRNA + NAD(+) = uridine(20b) in tRNA + NADH + H(+). The enzyme catalyses 5,6-dihydrouridine(20b) in tRNA + NADP(+) = uridine(20b) in tRNA + NADPH + H(+). It carries out the reaction a 5,6-dihydrouridine in mRNA + NAD(+) = a uridine in mRNA + NADH + H(+). The catalysed reaction is a 5,6-dihydrouridine in mRNA + NADP(+) = a uridine in mRNA + NADPH + H(+). Catalyzes the synthesis of dihydrouridine, a modified base found in the D-loop of most tRNAs. Also able to mediate dihydrouridylation of some mRNAs, thereby affecting their translation. The sequence is that of tRNA-dihydrouridine(20a/20b) synthase [NAD(P)+] from Schizosaccharomyces pombe (strain 972 / ATCC 24843) (Fission yeast).